The chain runs to 98 residues: Small ribosomal subunit protein uS19 (98 aa).

The tract at residues 77 to 98 is disordered; the sequence is TRTFRGHAGGKAEKGGSAPKKK.

The protein belongs to the universal ribosomal protein uS19 family.

In terms of biological role, protein S19 forms a complex with S13 that binds strongly to the 16S ribosomal RNA. The chain is Small ribosomal subunit protein uS19 from Chlorobium phaeobacteroides (strain DSM 266 / SMG 266 / 2430).